The primary structure comprises 117 residues: MTALALFDLLKPNYALATQVEFTDPEIVAEYITYPSPNGHGEVRGYLVKPAKMSGKTPAVVVVHENRGLNPYIEDVARRVAKAGYIALAPDGLSSVGGYPGNDDKGRELQQQVDPTN.

Residues 91–117 (DGLSSVGGYPGNDDKGRELQQQVDPTN) are disordered.

The sequence is that of Putative hydrolase fragment YghX (yghX) from Escherichia coli (strain K12).